A 423-amino-acid chain; its full sequence is UDP-N-acetylglucosamine 1-carboxyvinyltransferase 1 (423 aa).

23–24 (KN) serves as a coordination point for phosphoenolpyruvate. Arg-96 provides a ligand contact to UDP-N-acetyl-alpha-D-glucosamine. The active-site Proton donor is Cys-120. Cys-120 carries the 2-(S-cysteinyl)pyruvic acid O-phosphothioketal modification. Positions 309 and 331 each coordinate UDP-N-acetyl-alpha-D-glucosamine.

It belongs to the EPSP synthase family. MurA subfamily.

The protein resides in the cytoplasm. The catalysed reaction is phosphoenolpyruvate + UDP-N-acetyl-alpha-D-glucosamine = UDP-N-acetyl-3-O-(1-carboxyvinyl)-alpha-D-glucosamine + phosphate. Its pathway is cell wall biogenesis; peptidoglycan biosynthesis. Cell wall formation. Adds enolpyruvyl to UDP-N-acetylglucosamine. The polypeptide is UDP-N-acetylglucosamine 1-carboxyvinyltransferase 1 (Streptococcus pyogenes serotype M1).